The following is an 881-amino-acid chain: DNA replication helicase (881 aa).

90-97 (GNAGSGKS) lines the ATP pocket.

Belongs to the herpesviridae helicase family. Associates with the primase and the primase-associated factor to form the helicase-primase complex.

The protein resides in the host nucleus. Functionally, component of the helicase/primase complex. Unwinds the DNA at the replication forks and generates single-stranded DNA for both leading and lagging strand synthesis. The primase synthesizes short RNA primers on the lagging strand that the polymerase elongates using dNTPs. Possesses helicase-like motifs and therefore may act as the helicase subunit of the complex. The polypeptide is DNA replication helicase (Homo sapiens (Human)).